An 843-amino-acid polypeptide reads, in one-letter code: Probable disease resistance protein At5g47250 (843 aa).

Residues 28–58 (MLKENLVLLKSAFDELKAEKEDVVNRVNAGE) adopt a coiled-coil conformation. Positions 141–440 (TEQPPPPVVE…GEGFIDEKDG (300 aa)) constitute an NB-ARC domain. Residue 183–190 (GMGGVGKT) coordinates ATP. LRR repeat units lie at residues 510–531 (TVTKMSLFNNEIKNIPDDPEFP), 535–556 (NLVTLFLQNNRLVDIVGKFFLV), 559–581 (TLVVLDLSWNFQITELPKGISAL), 583–604 (SLRLLNLSGTSIKHLPEGLGVL), and 606–628 (KLIHLNLESTSNLRSVGLISELQ).

The protein belongs to the disease resistance NB-LRR family.

Its function is as follows. Probable disease resistance protein. The sequence is that of Probable disease resistance protein At5g47250 from Arabidopsis thaliana (Mouse-ear cress).